A 90-amino-acid chain; its full sequence is Protein PRAC2 (90 aa).

Highly expressed in prostate and testis. Also detected in placenta, muscle, colon, peripheral blood leukocytes and skin.

It localises to the nucleus. The sequence is that of Protein PRAC2 from Homo sapiens (Human).